The chain runs to 134 residues: Arsenate reductase 2 (134 aa).

Active-site nucleophile residues include Cys11, Cys83, and Cys90. Disulfide bonds link Cys11–Cys83 and Cys83–Cys90.

Belongs to the low molecular weight phosphotyrosine protein phosphatase family. Thioredoxin-coupled ArsC subfamily.

It is found in the cytoplasm. The catalysed reaction is arsenate + [thioredoxin]-dithiol + H(+) = arsenite + [thioredoxin]-disulfide + H2O. Its function is as follows. Catalyzes the reduction of arsenate [As(V)] to arsenite [As(III)]. The sequence is that of Arsenate reductase 2 from Bacillus cereus (strain ATCC 10987 / NRS 248).